The chain runs to 113 residues: Meiotically up-regulated gene 98 protein, mitochondrial (113 aa).

It localises to the mitochondrion. In terms of biological role, has a role in meiosis. This Schizosaccharomyces pombe (strain 972 / ATCC 24843) (Fission yeast) protein is Meiotically up-regulated gene 98 protein, mitochondrial (mug98).